Consider the following 181-residue polypeptide: Histone deacetylase complex subunit SAP30L-B (181 aa).

Disulfide bonds link Cys-26–Cys-27 and Cys-35–Cys-71. Residues 26-74 (CCLIDGGERCPRPAGNASFSKRVQKSISQKKLKLDIDKSVRHLYICDFH) form an Atypical zinc finger. The tract at residues 82–103 (RNKRKRKTSDDGGDSPEHETDV) is disordered. The short motif at 83-88 (NKRKRK) is the Nuclear localization signal (NLS) element. The tract at residues 85–87 (RKR) is important for DNA and phosphoinositide binding.

It belongs to the SAP30 family. In terms of assembly, interacts with components of the histone deacetylase complex sin3a, hdac1 and hdac2. Binds histones and nucleosomes.

The protein localises to the nucleus. Its subcellular location is the nucleolus. Functionally, functions as a transcription repressor, probably via its interaction with histone deacetylase complexes. Involved in the functional recruitment of the class 1 Sin3-histone deacetylase complex (HDAC) to the nucleolus. Binds DNA, apparently without sequence-specificity, and bends bound double-stranded DNA. Binds phosphoinositol phosphates (phosphoinositol 3-phosphate, phosphoinositol 4-phosphate and phosphoinositol 5-phosphate) via the same basic sequence motif that mediates DNA binding and nuclear import. The polypeptide is Histone deacetylase complex subunit SAP30L-B (sap30l-b) (Xenopus laevis (African clawed frog)).